The chain runs to 671 residues: RNA polymerase sigma factor RpoD (671 aa).

2 disordered regions span residues 1–45 and 229–260; these read MKKK…SKIK and DDDE…VSEK. A compositionally biased stretch (basic and acidic residues) spans 251-260; the sequence is EERKKVVSEK. The tract at residues 436 to 506 is sigma-70 factor domain-2; the sequence is MAKSNLRLVV…SRAIADQART (71 aa). The Interaction with polymerase core subunit RpoC signature appears at 460–463; it reads DLIQ. Residues 515-591 form a sigma-70 factor domain-3 region; that stretch reads DTINRINKVM…DKNIVSSIDH (77 aa). The interval 604-658 is sigma-70 factor domain-4; that stretch reads VLDQLNEREKAVIRMRFGLLDDESDRTLEEIGKELNVTRERVRQIESSAIKKLRS. The segment at residues 631–650 is a DNA-binding region (H-T-H motif); it reads LEEIGKELNVTRERVRQIES.

Belongs to the sigma-70 factor family. RpoD/SigA subfamily. In terms of assembly, interacts transiently with the RNA polymerase catalytic core.

It is found in the cytoplasm. Sigma factors are initiation factors that promote the attachment of RNA polymerase to specific initiation sites and are then released. This sigma factor is the primary sigma factor during exponential growth. This is RNA polymerase sigma factor RpoD from Helicobacter pylori (strain ATCC 700392 / 26695) (Campylobacter pylori).